A 70-amino-acid chain; its full sequence is Small ribosomal subunit protein bS21 (70 aa).

This sequence belongs to the bacterial ribosomal protein bS21 family.

The polypeptide is Small ribosomal subunit protein bS21 (Campylobacter jejuni subsp. jejuni serotype O:23/36 (strain 81-176)).